The following is a 604-amino-acid chain: NADPH oxidase activator (604 aa).

TPR repeat units follow at residues 36-69 (SKINYNIGVMYIKSNNFRNAIEYFNRSVEQDKYL) and 71-103 (SSYYMRAIAHHMNGELNHAIVDYDETISKLRGH). 2 disordered regions span residues 180 to 298 (FKPP…KLPS) and 383 to 581 (DIIP…PYQV). 2 stretches are compositionally biased toward low complexity: residues 194–215 (SATTSSIQSSSPSTPMSSSPPS) and 225–243 (PSSSSPSSSSPSLSSSSSP). Over residues 244-260 (KLPPTPKPSFGSSPPPS) the composition is skewed to pro residues. Residues 261–284 (SSSSSSSSSSSSSSSISPLTNKTL) are compositionally biased toward low complexity. Residues 309-384 (KITLKVFYKD…EINEINVKDI (76 aa)) enclose the PB1 domain. 3 stretches are compositionally biased toward low complexity: residues 396 to 424 (PDKTNNSTSSYSSSSSSSSSSSSSSSSSS), 435 to 453 (PKTTTRPILPPTTTTTTST), and 467 to 483 (FGSTPSSPSFSSPSSSS). A compositionally biased stretch (polar residues) spans 502–528 (LLKQQNQTQSINIPPKVPTSSRPKMTQ). A compositionally biased stretch (low complexity) spans 529-570 (SHSPPSSSPLSSYSTSFQSVSSPSLSSSYNGSTSSYGGFSSS). The WW domain occupies 573–604 (PPTPYPYQVLYTDSNEKYYLNTETNETFWELP).

Its function is as follows. May function as an activator of NOX1, a superoxide-producing NADPH oxidase. The sequence is that of NADPH oxidase activator (ncfA) from Dictyostelium discoideum (Social amoeba).